Here is a 455-residue protein sequence, read N- to C-terminus: GTPase Der (455 aa).

2 consecutive EngA-type G domains span residues 4 to 169 (PVVA…PPKD) and 178 to 353 (IQMA…EQHR). GTP contacts are provided by residues 10-17 (GRPNVGKS), 57-61 (DTGGL), 120-123 (NKCE), 184-191 (GRPNVGKS), 231-235 (DTAGI), and 296-299 (NKWD). The KH-like domain maps to 354–439 (RRVSTSVVNE…PLRLFWRGKQ (86 aa)).

Belongs to the TRAFAC class TrmE-Era-EngA-EngB-Septin-like GTPase superfamily. EngA (Der) GTPase family. As to quaternary structure, associates with the 50S ribosomal subunit.

Its function is as follows. GTPase that plays an essential role in the late steps of ribosome biogenesis. This Synechococcus sp. (strain CC9605) protein is GTPase Der.